The primary structure comprises 386 residues: MSKTIIKNIGKIVSGDIKSPVLQADTIVVEDGLIAAIGGEELMKDAGDATIIDAAGSTVTPGLLDTHVHVSGGDYAPRQKTMDFISSALHGGVTTMISAGSPHFPGRPKDAAGTKALAITLSKSYYNARPAGVKVHGGAVILEKGLTEEDFIEMKKEGVWIVGEVGLGTIKNPEDAAPMVEWAHKHGFKVQMHTGGTSIPGSSTVTADDVIKTKPDVVSHINGGPTAISVQEVDRIMDETDFAMEIVQCGNPKIADYVARRAAEKGQLGRVIFGNDAPSGTGLIPLGILRNMCQIASMSDIDPEVAVCMATGNSTAVYGLNTGVIAPGKEADLIIMDTPLGSVAEDAMGAIAAGDIPGISVVLIDGEAVVTKSRNTPPAKRAAKIL.

The Zn(2+) site is built by H67, H69, and E164. Positions 164, 193, and 220 each coordinate Fe cation. D276 lines the Zn(2+) pocket.

As to quaternary structure, homotetramer. Dimer of dimers. It depends on Fe cation as a cofactor. Zn(2+) is required as a cofactor.

The enzyme catalyses 1,4,5,6-tetrahydro-6-oxonicotinate + 2 H2O = 2-formylglutarate + NH4(+). The protein operates within cofactor degradation; nicotinate degradation; propanoate and pyruvate from 6-hydroxynicotinate: step 2/8. Its function is as follows. Decyclization of 6-oxo-1,4,5,6-tetrahydronicotinate to form 2-(enamine)glutarate, followed by hydrolysis to form (S)-2-formylglutarate. In Eubacterium barkeri (Clostridium barkeri), this protein is Enamidase.